We begin with the raw amino-acid sequence, 540 residues long: MKLLGLVFLLFNLFMFSFSRKLLTESGGGLHDEAALLKLKSSFLDPNGVLSSWVSDSSSNHCSWYGVSCNSDSRVVSLILRGCDELEGSGVLHLPDLSSCSSSKRRLGGVISPVVGDLSEIRVLSLSFNDLRGEIPKEIWGLEKLEILDLKGNNFIGGIRVVDNVVLRKLMSFEDEDEIGPSSADDDSPGKSGLYPIEIASIVSASVIVFVLLVLVILFIYTRKWKRNSQVQVDEIKEIKVFVDIGIPLTYEIIVRATGYFSNSNCIGHGGFGSTYKAEVSPTNVFAVKRLSVGRFQGDQQFHAEISALEMVRHPNLVMLIGYHASETEMFLIYNYLSGGNLQDFIKERSKAAIEWKVLHKIALDVARALSYLHEQCSPKVLHRDIKPSNILLDNNYNAYLSDFGLSKLLGTSQSHVTTGVAGTFGYVAPEYAMTCRVSEKADVYSYGIVLLELISDKRALDPSFSSHENGFNIVSWAHMMLSQGKAKEVFTTGLWETGPPDDLVEVLHLALKCTVDSLSIRPTMKQAVRLLKRIQPSRL.

Residues 1 to 19 (MKLLGLVFLLFNLFMFSFS) form the signal peptide. The Extracellular portion of the chain corresponds to 20-198 (RKLLTESGGG…PGKSGLYPIE (179 aa)). LRR repeat units follow at residues 118–142 (LSEIRVLSLSFNDLRGEIPKEIWGL) and 144–169 (KLEILDLKGNNFIGGIRVVDNVVLRK). Residues 199–219 (IASIVSASVIVFVLLVLVILF) form a helical membrane-spanning segment. Topologically, residues 220–540 (IYTRKWKRNS…LLKRIQPSRL (321 aa)) are cytoplasmic. 2 positions are modified to phosphothreonine: threonine 250 and threonine 258. Residues 261 to 535 (FSNSNCIGHG…KQAVRLLKRI (275 aa)) form the Protein kinase domain. Residues 267–275 (IGHGGFGST) and lysine 289 contribute to the ATP site. Tyrosine 334 and tyrosine 372 each carry phosphotyrosine. Residue aspartate 385 is the Proton acceptor of the active site. Tyrosine 427 carries the post-translational modification Phosphotyrosine. Threonine 435 carries the post-translational modification Phosphothreonine.

The protein belongs to the protein kinase superfamily. Ser/Thr protein kinase family. Expressed in roots, stems, leaves, and flowers.

It is found in the cell membrane. It carries out the reaction L-seryl-[protein] + ATP = O-phospho-L-seryl-[protein] + ADP + H(+). The enzyme catalyses L-threonyl-[protein] + ATP = O-phospho-L-threonyl-[protein] + ADP + H(+). Involved in the main abscisic acid-mediated (ABA) signaling pathway and in early ABA perception. Together with RPK2, required for pattern formation along the radial axis (e.g. the apical embryonic domain cell types that generate cotyledon primordia), and the apical-basal axis (e.g. differentiation of the basal pole during early embryogenesis). This Arabidopsis thaliana (Mouse-ear cress) protein is Probable LRR receptor-like serine/threonine-protein kinase RPK1 (RPK1).